The following is a 207-amino-acid chain: Large ribosomal subunit protein bL25 (207 aa).

It belongs to the bacterial ribosomal protein bL25 family. CTC subfamily. As to quaternary structure, part of the 50S ribosomal subunit; part of the 5S rRNA/L5/L18/L25 subcomplex. Contacts the 5S rRNA. Binds to the 5S rRNA independently of L5 and L18.

This is one of the proteins that binds to the 5S RNA in the ribosome where it forms part of the central protuberance. In Rhizorhabdus wittichii (strain DSM 6014 / CCUG 31198 / JCM 15750 / NBRC 105917 / EY 4224 / RW1) (Sphingomonas wittichii), this protein is Large ribosomal subunit protein bL25.